Reading from the N-terminus, the 131-residue chain is D-ribose pyranase (131 aa).

Catalysis depends on His-20, which acts as the Proton donor. Residues Asp-28, His-98, and 120–122 (FSN) each bind substrate.

Belongs to the RbsD / FucU family. RbsD subfamily. In terms of assembly, homodecamer.

The protein resides in the cytoplasm. The enzyme catalyses beta-D-ribopyranose = beta-D-ribofuranose. It participates in carbohydrate metabolism; D-ribose degradation; D-ribose 5-phosphate from beta-D-ribopyranose: step 1/2. Catalyzes the interconversion of beta-pyran and beta-furan forms of D-ribose. This Petrotoga mobilis (strain DSM 10674 / SJ95) protein is D-ribose pyranase.